Consider the following 194-residue polypeptide: RxLR effector protein Avh240 (194 aa).

The signal sequence occupies residues 1–23 (MRPYFTLLLALAFILACTNLVEA). The RxLR-dEER motif lies at 38–57 (RHLRTAVASVVDLPDDEDER). Positions 58 to 108 (LLGYNTVQLWRMRRTANKLMNGKLTTQKEAALKKWMASQQDKFLAKWLKSS) are host plasma membrane-binding.

The protein belongs to the RxLR effector family. Homodimer. Interacts with host soybean aspartic protease AP1.

Its subcellular location is the secreted. The protein resides in the host cell membrane. In terms of biological role, effector that suppresses plant defense responses during the early stages of pathogen infection. Suppresses cell death induced by effectors and PAMPs in plant hosts. Avh240 dimerizes and localizes at the plasma membrane to interfere with aspartic protease AP1 secretion, which presents an effective mechanism by which effector proteins suppress plant apoplastic immunity. In Phytophthora sojae (Soybean stem and root rot agent), this protein is RxLR effector protein Avh240.